Reading from the N-terminus, the 154-residue chain is Prefoldin subunit alpha (154 aa).

Positions 119–154 (EKAEVETEMEELEQQAQQMQQQQMQQMMQQQEQEDE) are disordered. A compositionally biased stretch (low complexity) spans 132 to 154 (QQAQQMQQQQMQQMMQQQEQEDE).

The protein belongs to the prefoldin subunit alpha family. As to quaternary structure, heterohexamer of two alpha and four beta subunits.

It localises to the cytoplasm. Its function is as follows. Molecular chaperone capable of stabilizing a range of proteins. Seems to fulfill an ATP-independent, HSP70-like function in archaeal de novo protein folding. The protein is Prefoldin subunit alpha of Haloarcula marismortui (strain ATCC 43049 / DSM 3752 / JCM 8966 / VKM B-1809) (Halobacterium marismortui).